A 116-amino-acid polypeptide reads, in one-letter code: Ribonuclease P protein component (116 aa).

Belongs to the RnpA family. As to quaternary structure, consists of a catalytic RNA component (M1 or rnpB) and a protein subunit.

It carries out the reaction Endonucleolytic cleavage of RNA, removing 5'-extranucleotides from tRNA precursor.. Its function is as follows. RNaseP catalyzes the removal of the 5'-leader sequence from pre-tRNA to produce the mature 5'-terminus. It can also cleave other RNA substrates such as 4.5S RNA. The protein component plays an auxiliary but essential role in vivo by binding to the 5'-leader sequence and broadening the substrate specificity of the ribozyme. The chain is Ribonuclease P protein component from Gluconacetobacter diazotrophicus (strain ATCC 49037 / DSM 5601 / CCUG 37298 / CIP 103539 / LMG 7603 / PAl5).